We begin with the raw amino-acid sequence, 583 residues long: MKSIPIILLVLIGLLLASVYSHDILITEKGQKSLDKLDKAAATTLQHGENIQLSCDVCQIGASLLEDFIKKNASLTEIIKGLSDLCIASKEEQPEVCTGILNNYVPIIVDVLIQSDFTPSQLCGYFKICSATGSSESSSISNSFDNEYRQESFNKPTMKVNKKPQYKDLSNQEPLVKKFKGNDSIGYILQISDVHFDPDYKVGSNPNCGRPLCCRDGVGSAGPIGHYLCDIPFSTVELIFQHLATLTDQLDFIVWTGDNPPHNVWEQSQAQQELATATLAQVIQKTFPNTPVLPSLGNHEAYPADQYVLPNSQWLLDSIYTYWAPWLDADALELVKERGYYTSLIKPGLRVMSLNTLENDMINFYNLLPTYLKGPNNQSDWMINTLEQAQSNGEKVLIIGHIPCTVKSASTDGWCAMYEQVVGQFSDVIIGQLYGHTHYDQFSVFSDVATHTIPTGMNYIVPSLTTYQNHEPGYRIYQFDYSTNQIVNYYQYHANITEANETGALNFQLTYSAKELYNMDDLSPTSWTKVANQMKTNSTMFNSYFENLSSSPIKESCDQACQTKWICQIFGITSSEFDKCYGV.

Residues 1 to 21 form the signal peptide; sequence MKSIPIILLVLIGLLLASVYS. A Saposin B-type domain is found at 51 to 133; that stretch reads IQLSCDVCQI…GYFKICSATG (83 aa). 3 disulfides stabilise this stretch: cysteine 55-cysteine 129, cysteine 58-cysteine 123, and cysteine 86-cysteine 97. Asparagine 72 carries an N-linked (GlcNAc...) asparagine glycan. N-linked (GlcNAc...) asparagine glycosylation is present at asparagine 182. The Zn(2+) site is built by aspartate 193 and histidine 195. Residues cysteine 214 and cysteine 229 are joined by a disulfide bond. Zn(2+)-binding residues include aspartate 258 and asparagine 298. Asparagine 377 carries N-linked (GlcNAc...) asparagine glycosylation. Positions 401, 436, and 438 each coordinate Zn(2+). N-linked (GlcNAc...) asparagine glycosylation is found at asparagine 495, asparagine 500, asparagine 537, and asparagine 547. Cysteine 567 and cysteine 580 are disulfide-bonded.

It belongs to the acid sphingomyelinase family. It depends on Zn(2+) as a cofactor.

The protein resides in the secreted. Converts sphingomyelin to ceramide. This is Sphingomyelin phosphodiesterase A (sgmA) from Dictyostelium discoideum (Social amoeba).